The following is a 129-amino-acid chain: GEL complex subunit OPTI (129 aa).

Over 1 to 44 (MSGGRRKEEPPQPQLANGALKVSVWSKVLRSDAAWDDKDEFLDV) the chain is Cytoplasmic. The helical transmembrane segment at 45–65 (IYWFRQIIALVLGVIWGVLPL) threads the bilayer. Arg66 is a topological domain (lumenal). A helical membrane pass occupies residues 67 to 84 (GFLGIAGFCLINAGVLYL). The Cytoplasmic portion of the chain corresponds to 85–103 (YFSNYLQIDEEEYGGTWEL). Residues 104–127 (TKEGFMTSFALFMVIWIIFYTAIH) traverse the membrane as a helical segment. Over 128–129 (YD) the chain is Lumenal.

This sequence belongs to the EMC6 family. Component of the GET- and EMC-like (GEL) complex, composed of RAB5IF/OPTI and TMCO1. The GEL complex is part of the multi-pass translocon (MPT) complex, composed of three subcomplexes, the GEL complex (composed of RAB5IF/OPTI and TMCO1), the BOS complex (composed of NCLN/Nicalin, NOMO1 and TMEM147) and the PAT complex (composed of WDR83OS/Asterix and CCDC47). The MPT complex associates with the SEC61 complex. Interacts with NDUFS3, NDUFA4, NDUFV1, NDUFA9 and NDUFS8 of the mitochondrial membrane respiratory chain NADH dehydrogenase (Complex I). Interacts with UQCRC2 of the ubiquinol-cytochrome c reductase complex (Complex III). Interacts with COX5A and COX7C of the cytochrome c oxidase complex (Complex IV). As to expression, expressed in neuronal cells.

The protein localises to the endoplasmic reticulum membrane. The protein resides in the mitochondrion inner membrane. Its function is as follows. Component of the multi-pass translocon (MPT) complex that mediates insertion of multi-pass membrane proteins into the lipid bilayer of membranes. The MPT complex takes over after the SEC61 complex: following membrane insertion of the first few transmembrane segments of proteins by the SEC61 complex, the MPT complex occludes the lateral gate of the SEC61 complex to promote insertion of subsequent transmembrane regions. Within the MPT complex, the GEL subcomplex may mediate insertion of transmembrane regions into the membrane. In addition to its role in multi-pass membrane insertion, RAB5IF/OPTI also acts as an assembly factor for mitochondrial respiratory complexes. In Mus musculus (Mouse), this protein is GEL complex subunit OPTI.